A 445-amino-acid polypeptide reads, in one-letter code: MKITSVKNEKELVSFEIDLSEKKWNEFLDKEILKASKNLKMPGYRPGKVPLEIAKKNINMPVCFVNALSSARERIEDWIIDQDEFKKMADEICDFDPVTSKPNNSNNVLNKTVSFTMSFGKYPEFKVKNVKDIKIEKIESKVNKQMVDQAIEKELAKNETMSVKERAAKLNDIVIIDFKGYVDNVAFEGGEAKNYELKLGSKSFIDNFEEQLVGLKAGDKKDVNVTFPKDYHVANLKGKKAKFEVTVHVVNEVETPKLDDEFVKSLNLKNVNTVAEYKKHLEAELQKQLDGTVDNQIQSALYTELNKMVPSDLKIHEGLVNNVAEIFISRLMISLIGKVVNIDEFVKMIDGGRGALTKEKLIEEEKNQAREYLKVKFALKQYSKVEKISVSNEDIEKEIKEIAANSNTKEKEIKEDFAVYSSIKREALDKKVFEYLKNQVAKAAK.

The 86-residue stretch at 171-256 (NDIVIIDFKG…VHVVNEVETP (86 aa)) folds into the PPIase FKBP-type domain.

Belongs to the FKBP-type PPIase family. Tig subfamily.

It is found in the cytoplasm. The enzyme catalyses [protein]-peptidylproline (omega=180) = [protein]-peptidylproline (omega=0). Functionally, involved in protein export. Acts as a chaperone by maintaining the newly synthesized protein in an open conformation. Functions as a peptidyl-prolyl cis-trans isomerase. The polypeptide is Trigger factor (Malacoplasma penetrans (strain HF-2) (Mycoplasma penetrans)).